A 667-amino-acid chain; its full sequence is tRNA 5-methylaminomethyl-2-thiouridine biosynthesis bifunctional protein MnmC (667 aa).

A tRNA (mnm(5)s(2)U34)-methyltransferase region spans residues 1 to 215 (MKFINGILFN…KREMIRAYFN (215 aa)). The segment at 240–667 (IGAGIAGIVT…LIRKLKKGLK (428 aa)) is FAD-dependent cmnm(5)s(2)U34 oxidoreductase.

This sequence in the N-terminal section; belongs to the methyltransferase superfamily. tRNA (mnm(5)s(2)U34)-methyltransferase family. The protein in the C-terminal section; belongs to the DAO family. FAD serves as cofactor.

Its subcellular location is the cytoplasm. The enzyme catalyses 5-aminomethyl-2-thiouridine(34) in tRNA + S-adenosyl-L-methionine = 5-methylaminomethyl-2-thiouridine(34) in tRNA + S-adenosyl-L-homocysteine + H(+). Its function is as follows. Catalyzes the last two steps in the biosynthesis of 5-methylaminomethyl-2-thiouridine (mnm(5)s(2)U) at the wobble position (U34) in tRNA. Catalyzes the FAD-dependent demodification of cmnm(5)s(2)U34 to nm(5)s(2)U34, followed by the transfer of a methyl group from S-adenosyl-L-methionine to nm(5)s(2)U34, to form mnm(5)s(2)U34. The sequence is that of tRNA 5-methylaminomethyl-2-thiouridine biosynthesis bifunctional protein MnmC from Campylobacter hominis (strain ATCC BAA-381 / DSM 21671 / CCUG 45161 / LMG 19568 / NCTC 13146 / CH001A).